A 3343-amino-acid polypeptide reads, in one-letter code: Cadherin-3 (3343 aa).

An N-terminal signal peptide occupies residues 1-26 (MTIRIFFSIFLLNHLIFFHLFNFTHQ). A glycan (N-linked (GlcNAc...) asparagine) is linked at Asn-22. Residues 27 to 3228 (FSEETIKFSV…LFSNFSNTTT (3202 aa)) are Extracellular-facing. 3 Cadherin domains span residues 28 to 117 (SEET…SPIF), 118 to 229 (PIDV…PPNF), and 242 to 330 (PNTK…EPNI). N-linked (GlcNAc...) asparagine glycosylation is found at Asn-149, Asn-250, Asn-288, Asn-369, Asn-467, and Asn-612. The region spanning 632–738 (ICQITEIHVL…EDVNDNVPKF (107 aa)) is the Cadherin 4 domain. Residues Asn-752, Asn-806, Asn-941, Asn-966, Asn-970, Asn-985, Asn-1042, Asn-1335, Asn-1425, Asn-1429, Asn-1557, Asn-1563, Asn-1597, Asn-1624, Asn-1695, and Asn-1702 are each glycosylated (N-linked (GlcNAc...) asparagine). Positions 1279–1368 (RENELMFEIE…ADVNDNKPKI (90 aa)) constitute a Cadherin 5 domain. Cadherin domains follow at residues 1545–1648 (DKAA…APRF), 1676–1756 (AEDL…TPEF), and 1757–1857 (ELSS…HPMI). N-linked (GlcNAc...) asparagine glycosylation is found at Asn-1895 and Asn-1900. 3 consecutive Cadherin domains span residues 1954-2045 (TVSV…SPRF), 2046-2145 (DQQL…NAPR), and 2146-2245 (FSRI…APIF). Residues Asn-2053, Asn-2129, Asn-2203, Asn-2382, Asn-2391, Asn-2410, Asn-2414, Asn-2431, Asn-2527, Asn-2530, Asn-2564, Asn-2621, Asn-2665, Asn-2712, Asn-2798, Asn-2809, Asn-2927, Asn-2976, and Asn-3045 are each glycosylated (N-linked (GlcNAc...) asparagine). A Laminin G-like domain is found at 3040-3205 (EISVRNGTSH…SSTGTSRNEC (166 aa)). Cys-3172 and Cys-3205 are disulfide-bonded. N-linked (GlcNAc...) asparagine glycans are attached at residues Asn-3222 and Asn-3225. Residues 3229-3250 (LILLITLALISLIGFSVCLLAI) form a helical membrane-spanning segment. Topologically, residues 3251–3343 (RRRWRQKSPG…RDGHINMAYL (93 aa)) are cytoplasmic. Residues 3257-3277 (KSPGDQKQTERSNGWTGHVMP) are disordered.

Expressed in the anchor cell.

It is found in the cell membrane. The protein resides in the basolateral cell membrane. Its subcellular location is the cell junction. Its function is as follows. Cell adhesion protein involved in the control of epithelial morphogenesis. Together with metalloproteinase zmp-1 and hemicentin him-4, plays a role in anchor cell (AC) invasion during postembryonic vulval development. The polypeptide is Cadherin-3 (cdh-3) (Caenorhabditis elegans).